The sequence spans 752 residues: Maltodextrin phosphorylase (752 aa).

The residue at position 603 (K603) is an N6-(pyridoxal phosphate)lysine.

This sequence belongs to the glycogen phosphorylase family. It depends on pyridoxal 5'-phosphate as a cofactor.

The enzyme catalyses [(1-&gt;4)-alpha-D-glucosyl](n) + phosphate = [(1-&gt;4)-alpha-D-glucosyl](n-1) + alpha-D-glucose 1-phosphate. Functionally, phosphorylase is an important allosteric enzyme in carbohydrate metabolism. Enzymes from different sources differ in their regulatory mechanisms and in their natural substrates. However, all known phosphorylases share catalytic and structural properties. This Streptococcus pneumoniae serotype 4 (strain ATCC BAA-334 / TIGR4) protein is Maltodextrin phosphorylase (malP).